The primary structure comprises 76 residues: Cytochrome c oxidase subunit 6C (76 aa).

The Mitochondrial matrix portion of the chain corresponds to 4–22 (GALLPKPQMRGLLAKRLRV). The helical transmembrane segment at 23-44 (HIAGAFIVALGVAAAYKFGVAE) threads the bilayer. Residues 45-76 (PRKKAYAEFYRNYDSMKDFEEMRKAGIFQSAK) lie on the Mitochondrial intermembrane side of the membrane.

The protein belongs to the cytochrome c oxidase subunit 6c family. In terms of assembly, component of the cytochrome c oxidase (complex IV, CIV), a multisubunit enzyme composed of 14 subunits. The complex is composed of a catalytic core of 3 subunits MT-CO1, MT-CO2 and MT-CO3, encoded in the mitochondrial DNA, and 11 supernumerary subunits COX4I, COX5A, COX5B, COX6A, COX6B, COX6C, COX7A, COX7B, COX7C, COX8 and NDUFA4, which are encoded in the nuclear genome. The complex exists as a monomer or a dimer and forms supercomplexes (SCs) in the inner mitochondrial membrane with NADH-ubiquinone oxidoreductase (complex I, CI) and ubiquinol-cytochrome c oxidoreductase (cytochrome b-c1 complex, complex III, CIII), resulting in different assemblies (supercomplex SCI(1)III(2)IV(1) and megacomplex MCI(2)III(2)IV(2)). In terms of processing, acetylation of Lys-61 is observed in liver mitochondria from fasted mice but not from fed mice.

The protein localises to the mitochondrion inner membrane. Its pathway is energy metabolism; oxidative phosphorylation. Component of the cytochrome c oxidase, the last enzyme in the mitochondrial electron transport chain which drives oxidative phosphorylation. The respiratory chain contains 3 multisubunit complexes succinate dehydrogenase (complex II, CII), ubiquinol-cytochrome c oxidoreductase (cytochrome b-c1 complex, complex III, CIII) and cytochrome c oxidase (complex IV, CIV), that cooperate to transfer electrons derived from NADH and succinate to molecular oxygen, creating an electrochemical gradient over the inner membrane that drives transmembrane transport and the ATP synthase. Cytochrome c oxidase is the component of the respiratory chain that catalyzes the reduction of oxygen to water. Electrons originating from reduced cytochrome c in the intermembrane space (IMS) are transferred via the dinuclear copper A center (CU(A)) of subunit 2 and heme A of subunit 1 to the active site in subunit 1, a binuclear center (BNC) formed by heme A3 and copper B (CU(B)). The BNC reduces molecular oxygen to 2 water molecules using 4 electrons from cytochrome c in the IMS and 4 protons from the mitochondrial matrix. In Mus musculus (Mouse), this protein is Cytochrome c oxidase subunit 6C (Cox6c).